The chain runs to 836 residues: Outer membrane usher protein PapC (836 aa).

Residues 1 to 24 (MKDRIPFAVNNITCVILLSLFCNA) form the signal peptide. The cysteines at positions 814 and 832 are disulfide-linked.

Belongs to the fimbrial export usher family.

Its subcellular location is the cell outer membrane. Functionally, involved in the export and assembly of pili subunits across the outer membrane. Forms a hexameric ring-shaped pore in the outer bacterial membrane. The 2 nanometer-diameter pore allows the passage of the thin tip fibrillum. As for the rod, it probably unwinds into linear fibers which would therefore be narrow enough to pass through the pore. This Escherichia coli protein is Outer membrane usher protein PapC (papC).